We begin with the raw amino-acid sequence, 142 residues long: Large ribosomal subunit protein uL11 (142 aa).

It belongs to the universal ribosomal protein uL11 family. As to quaternary structure, part of the ribosomal stalk of the 50S ribosomal subunit. Interacts with L10 and the large rRNA to form the base of the stalk. L10 forms an elongated spine to which L12 dimers bind in a sequential fashion forming a multimeric L10(L12)X complex. One or more lysine residues are methylated.

Its function is as follows. Forms part of the ribosomal stalk which helps the ribosome interact with GTP-bound translation factors. This chain is Large ribosomal subunit protein uL11, found in Acinetobacter baumannii (strain AB307-0294).